A 207-amino-acid chain; its full sequence is Lipid A acyltransferase PagP (207 aa).

The first 24 residues, 1-24 (MKFDLTTAYTLSIPLLASSGTVLA), serve as a signal peptide directing secretion. Catalysis depends on residues histidine 79, aspartate 122, and serine 123.

This sequence belongs to the lipid A palmitoyltransferase family. In terms of assembly, homodimer.

It is found in the cell outer membrane. The catalysed reaction is a lipid A + a 1,2-diacyl-sn-glycero-3-phosphocholine = a hepta-acyl lipid A + a 2-acyl-sn-glycero-3-phosphocholine. It catalyses the reaction a lipid IVA + a 1,2-diacyl-sn-glycero-3-phosphocholine = a lipid IVB + a 2-acyl-sn-glycero-3-phosphocholine. It carries out the reaction a lipid IIA + a 1,2-diacyl-sn-glycero-3-phosphocholine = a lipid IIB + a 2-acyl-sn-glycero-3-phosphocholine. Functionally, transfers a fatty acid residue from the sn-1 position of a phospholipid to the N-linked hydroxyfatty acid chain on the proximal unit of lipid A or its precursors. This is Lipid A acyltransferase PagP from Photorhabdus asymbiotica subsp. asymbiotica (strain ATCC 43949 / 3105-77) (Xenorhabdus luminescens (strain 2)).